We begin with the raw amino-acid sequence, 891 residues long: uncharacterized protein (891 aa).

A signal peptide spans Met-1–Ala-20. The next 6 helical transmembrane spans lie at Val-525–Ile-545, Thr-568–Ala-588, Leu-614–Ile-634, Val-652–Met-672, Ile-685–Ile-705, and Phe-776–Leu-796.

This sequence belongs to the TrbL/VirB6 family.

It localises to the cell membrane. This is an uncharacterized protein from Rickettsia conorii (strain ATCC VR-613 / Malish 7).